The primary structure comprises 1394 residues: Tubulin glycylase 3E (1394 aa).

4 disordered regions span residues 201–230 (KKKS…QRKE), 563–582 (NQKD…QNSI), 620–663 (DENE…TSNF), and 682–706 (STVK…NLKE). Low complexity predominate over residues 205–216 (NFQNKSQSQLNN). Positions 217-230 (HKNEEKKPSQQRKE) are enriched in basic and acidic residues. Over residues 568–582 (QSNQTSSVISQQNSI) the composition is skewed to low complexity. The span at 627-655 (KENVLQQKKNQSNQIVTSQQQSNNYFKQE) shows a compositional bias: polar residues. Positions 682 to 703 (STVKNSDNNNQNQTNPQNQNTN) are enriched in low complexity. Residues 911–1250 (RFIFNITVIA…QNNLQEDLEI (340 aa)) form the TTL domain. Residues 1058–1061 (QKYI), Lys-1079, and Asp-1081 contribute to the ATP site. 2 IQ domains span residues 1320 to 1349 (QYWG…QKFT) and 1348 to 1377 (FTFA…QQQT).

Its subcellular location is the cell projection. The protein localises to the cilium. It is found in the cytoplasm. The protein resides in the cytoskeleton. It localises to the cilium axoneme. Functionally, probable glycylase which modifies tubulin, generating side chains of glycine on the gamma-carboxyl groups of specific glutamate residues within the C-terminal tail of tubulin. The sequence is that of Tubulin glycylase 3E (TTLL3E) from Tetrahymena thermophila (strain SB210).